Here is a 218-residue protein sequence, read N- to C-terminus: Glutathione S-transferase Mu 4 (218 aa).

The 87-residue stretch at 2 to 88 (SMTLGYWDIR…YIARKHNLCG (87 aa)) folds into the GST N-terminal domain. Residues 7-8 (YW), 46-50 (WLNEK), 59-60 (NL), and 72-73 (QS) each bind glutathione. Residues 90 to 208 (TEEEKIRVDI…KSSRFLPKPL (119 aa)) form the GST C-terminal domain. Tyr-116 serves as a coordination point for substrate.

Belongs to the GST superfamily. Mu family. In terms of assembly, homodimer. As to expression, expressed in a wide variety of tissues.

It is found in the cytoplasm. It carries out the reaction RX + glutathione = an S-substituted glutathione + a halide anion + H(+). The catalysed reaction is 1-chloro-2,4-dinitrobenzene + glutathione = 2,4-dinitrophenyl-S-glutathione + chloride + H(+). The enzyme catalyses (13S,14S)-epoxy-(4Z,7Z,9E,11E,16Z,19Z)-docosahexaenoate + glutathione = (13R)-S-glutathionyl-(14S)-hydroxy-(4Z,7Z,9E,11E,16Z,19Z)-docosahexaenoate. It catalyses the reaction leukotriene C4 = leukotriene A4 + glutathione. In terms of biological role, conjugation of reduced glutathione to a wide number of exogenous and endogenous hydrophobic electrophiles. Catalyzes the conjugation of leukotriene A4 with reduced glutathione (GSH) to form leukotriene C4. Can also catalyze the transfer of a glutathionyl group from glutathione (GSH) to 13(S),14(S)-epoxy-docosahexaenoic acid to form maresin conjugate in tissue regeneration 1 (MCTR1), a bioactive lipid mediator that possess potent anti-inflammatory and proresolving actions. This chain is Glutathione S-transferase Mu 4 (GSTM4), found in Homo sapiens (Human).